Reading from the N-terminus, the 290-residue chain is Glycine--tRNA ligase alpha subunit (290 aa).

The protein belongs to the class-II aminoacyl-tRNA synthetase family. As to quaternary structure, tetramer of two alpha and two beta subunits.

The protein localises to the cytoplasm. It catalyses the reaction tRNA(Gly) + glycine + ATP = glycyl-tRNA(Gly) + AMP + diphosphate. This is Glycine--tRNA ligase alpha subunit from Desulfotalea psychrophila (strain LSv54 / DSM 12343).